The following is a 1608-amino-acid chain: Mitogen-activated protein kinase kinase kinase 4 (1608 aa).

Positions 1–23 (MREAAAALVPPPAFAVTPAAAME) are enriched in low complexity. Disordered stretches follow at residues 1 to 136 (MREA…ENVE) and 429 to 478 (IPSP…RQPI). The segment covering 24–37 (EPPPPPPPPPPPPE) has biased composition (pro residues). Residues 66–76 (SDLEDFSDETN) show a composition bias toward acidic residues. Ser-84 carries the post-translational modification Phosphoserine. The span at 91–101 (QMKRMSTKHQR) shows a compositional bias: basic residues. Ser-431 is subject to Phosphoserine. Residue Thr-447 is modified to Phosphothreonine. A phosphoserine mark is found at Ser-456 and Ser-457. The span at 456 to 466 (SSTDESEEEQI) shows a compositional bias: acidic residues. The residue at position 458 (Thr-458) is a Phosphothreonine. 3 positions are modified to phosphoserine: Ser-461, Ser-481, and Ser-499. Disordered stretches follow at residues 1157-1190 (CHSDPPNPHLIIPTPEGFSTRSMPSDARSHGSPA), 1202-1231 (ASRPSPSGGDSVLPKSISSAHDTRGSSVPE), and 1244-1274 (FRSLSRHSSPTEERDEPAYPRGDSSGSTRRS). Polar residues predominate over residues 1217–1230 (SISSAHDTRGSSVP). Phosphoserine is present on residues Ser-1252 and Ser-1274. The span at 1252–1261 (SPTEERDEPA) shows a compositional bias: basic and acidic residues. In terms of domain architecture, Protein kinase spans 1343 to 1601 (WQRGNKIGEG…ASQLLDHSFV (259 aa)). ATP is bound by residues 1349–1357 (IGEGQYGKV) and Lys-1372. Asp-1463 (proton acceptor) is an active-site residue.

Belongs to the protein kinase superfamily. STE Ser/Thr protein kinase family. MAP kinase kinase kinase subfamily. Monomer and homodimer. Homodimerization enhances kinase activity. Interacts with TRAF4; this promotes homodimerization. Binds both upstream activators and downstream substrates in multimolecular complexes. Interacts with AXIN1 and DIXDC1; interaction with DIXDC1 prevents interaction with AXIN1. Interacts with GADD45 and MAP2K6. Interacts with ZFP36; this interaction enhances the association with SH3KBP1/CIN85. Interacts with SH3KBP1; this interaction enhances the association with ZFP36. Interacts with CDC42. It depends on Mg(2+) as a cofactor. As to expression, expressed at high levels in heart, placenta, skeletal muscle and pancreas, and at lower levels in other tissues.

Its subcellular location is the cytoplasm. It is found in the perinuclear region. The enzyme catalyses L-seryl-[protein] + ATP = O-phospho-L-seryl-[protein] + ADP + H(+). It catalyses the reaction L-threonyl-[protein] + ATP = O-phospho-L-threonyl-[protein] + ADP + H(+). With respect to regulation, N-terminal autoinhibitory domain interacts with the C-terminal kinase domain, inhibiting kinase activity, and preventing interaction with its substrate, MAP2K6. The GADD45 proteins activate the kinase by binding to the N-terminal domain. Activated by phosphorylation on Thr-1505. Component of a protein kinase signal transduction cascade. Activates the CSBP2, P38 and JNK MAPK pathways, but not the ERK pathway. Specifically phosphorylates and activates MAP2K4 and MAP2K6. The protein is Mitogen-activated protein kinase kinase kinase 4 (MAP3K4) of Homo sapiens (Human).